The following is a 100-amino-acid chain: Succinate dehydrogenase subunit 7B, mitochondrial (100 aa).

The segment at 1–25 is disordered; it reads MAFLLNNASISSHLRSSSSQKTGDA. The transit peptide at 1–32 directs the protein to the mitochondrion; the sequence is MAFLLNNASISSHLRSSSSQKTGDALSISRRG. Over residues 9–19 the composition is skewed to low complexity; the sequence is SISSHLRSSSS.

As to quaternary structure, component of complex II composed of eight subunits in plants: four classical SDH subunits SDH1, SDH2, SDH3 and SDH4 (a flavoprotein (FP), an iron-sulfur protein (IP), and a cytochrome b composed of a large and a small subunit.), as well as four subunits unknown in mitochondria from bacteria and heterotrophic eukaryotes.

The protein resides in the mitochondrion inner membrane. The protein operates within carbohydrate metabolism; tricarboxylic acid cycle. This Arabidopsis thaliana (Mouse-ear cress) protein is Succinate dehydrogenase subunit 7B, mitochondrial.